The primary structure comprises 108 residues: UPF0060 membrane protein YnfA (108 aa).

The Periplasmic segment spans residues 1 to 5 (MIKTT). A helical membrane pass occupies residues 6–26 (LLFFATALCEIIGCFLPWLWL). Residues 27–30 (KRNA) are Cytoplasmic-facing. The helical transmembrane segment at 31 to 51 (SIWLLLPAGISLALFVWLLTL) threads the bilayer. The Periplasmic segment spans residues 52 to 60 (HPAASGRVY). A helical transmembrane segment spans residues 61–81 (AAYGGVYVCTALMWLRVVDGV). The Cytoplasmic segment spans residues 82–84 (KLT). A helical transmembrane segment spans residues 85–105 (LYDWTGALIALCGMLIIVAGW). At 106–108 (GRT) the chain is on the periplasmic side.

Belongs to the UPF0060 family.

It localises to the cell inner membrane. In Escherichia coli O139:H28 (strain E24377A / ETEC), this protein is UPF0060 membrane protein YnfA.